Here is a 131-residue protein sequence, read N- to C-terminus: Small ribosomal subunit protein bS6 (131 aa).

The segment at 99–131 is disordered; the sequence is ASPMVKAKDERRERREDFATETNEDSDAGDSEE. Basic and acidic residues predominate over residues 104-116; that stretch reads KAKDERRERREDF. Residues 120–131 show a composition bias toward acidic residues; it reads TNEDSDAGDSEE.

This sequence belongs to the bacterial ribosomal protein bS6 family.

Functionally, binds together with bS18 to 16S ribosomal RNA. This is Small ribosomal subunit protein bS6 from Sodalis glossinidius (strain morsitans).